A 180-amino-acid chain; its full sequence is ATP-dependent protease subunit HslV (180 aa).

Threonine 8 is a catalytic residue. The Na(+) site is built by alanine 165, cysteine 168, and threonine 171.

This sequence belongs to the peptidase T1B family. HslV subfamily. As to quaternary structure, a double ring-shaped homohexamer of HslV is capped on each side by a ring-shaped HslU homohexamer. The assembly of the HslU/HslV complex is dependent on binding of ATP.

It localises to the cytoplasm. The enzyme catalyses ATP-dependent cleavage of peptide bonds with broad specificity.. With respect to regulation, allosterically activated by HslU binding. Its function is as follows. Protease subunit of a proteasome-like degradation complex believed to be a general protein degrading machinery. In Macrococcus caseolyticus (strain JCSC5402) (Macrococcoides caseolyticum), this protein is ATP-dependent protease subunit HslV.